The following is a 98-amino-acid chain: Complement inhibitor RaCI2 (98 aa).

The first 21 residues, 1–21 (MNAVTVLAFTAFALIVHDCYS), serve as a signal peptide directing secretion. 3 cysteine pairs are disulfide-bonded: Cys35-Cys59, Cys40-Cys61, and Cys55-Cys76.

The protein belongs to the RaCI family. As to expression, expressed in salivary glands.

The protein localises to the secreted. Its function is as follows. Complement inhibitor. Prevents complement-mediated C5 activation by binding to C5. Binds C5 at a different binding site than the other tick complement inhibitors OmCI and CirpT1, and the drug eculizumab. This Rhipicephalus microplus (Cattle tick) protein is Complement inhibitor RaCI2.